A 326-amino-acid chain; its full sequence is MNCLIAIALSVSFFLVGIVGPIQAQLQMNFYANSCPNAEKIVQDFVSNHVSNAPSLAAALIRMHFHDCFVRGCDGSVLINSTSGNAERDATPNLTVRGFGFIDAIKSVLEAQCPGIVSCADIIALASRDAVVFTGGPNWSVPTGRRDGRISNAAEALANIPPPTSNITNLQTLFANQGLDLKDLVLLSGAHTIGVSHCSSFTNRLYNFTGRGGQDPALDSEYAANLKSRKCPSLNDNKTIVEMDPGSRKTFDLSYYQLVLKRRGLFQSDSALTTNPTTLSNINRILTGSVGSFFSEFAKSMEKMGRINVKTGSAGVVRRQCSVANS.

An N-terminal signal peptide occupies residues Met-1–Ala-24. 4 disulfides stabilise this stretch: Cys-35-Cys-113, Cys-68-Cys-73, Cys-119-Cys-321, and Cys-198-Cys-231. His-66 acts as the Proton acceptor in catalysis. Ca(2+) contacts are provided by Asp-67, Val-70, Gly-72, Asp-74, and Ser-76. N-linked (GlcNAc...) asparagine glycans are attached at residues Asn-80 and Asn-138. Residue Pro-161 participates in substrate binding. Asn-166 carries N-linked (GlcNAc...) asparagine glycosylation. His-191 provides a ligand contact to heme b. Thr-192 contributes to the Ca(2+) binding site. Residues Asn-207 and Asn-237 are each glycosylated (N-linked (GlcNAc...) asparagine). Ca(2+)-binding residues include Asp-244, Ser-247, and Asp-252.

The protein belongs to the peroxidase family. Classical plant (class III) peroxidase subfamily. The cofactor is heme b. Ca(2+) is required as a cofactor. Expressed in root cells.

It is found in the secreted. The enzyme catalyses 2 a phenolic donor + H2O2 = 2 a phenolic radical donor + 2 H2O. Removal of H(2)O(2), oxidation of toxic reductants, biosynthesis and degradation of lignin, suberization, auxin catabolism, response to environmental stresses such as wounding, pathogen attack and oxidative stress. These functions might be dependent on each isozyme/isoform in each plant tissue. The polypeptide is Peroxidase 3 (PER3) (Arabidopsis thaliana (Mouse-ear cress)).